The chain runs to 325 residues: Gamma-hemolysin component B (325 aa).

The N-terminal stretch at 1 to 26 is a signal peptide; the sequence is MKMNKLVKSSVATSMALLLLSGTANA.

Belongs to the aerolysin family. Toxicity requires sequential binding and synergistic association of a class S and a class F component which form heterooligomeric complexes. HlgB (class F) associates with either hlgA thus forming an AB toxin or with hlgC thus forming a CB toxin. Interacts with host AMFR.

Its subcellular location is the secreted. Toxin that seems to act by forming pores in the membrane of the cell. Has a hemolytic and a leucotoxic activity. Promotes host AMFR-mediated inflammation by mediating 'Lys-27'-linked ubiquitination of TAB3, TAK1-TAB3 complex formation and phosphorylation of TAK1/MAP3K7. In turn, activates host NF-kappa-B signaling pathway. This Staphylococcus aureus (strain NCTC 8325 / PS 47) protein is Gamma-hemolysin component B (hlgB).